Reading from the N-terminus, the 100-residue chain is Large ribosomal subunit protein uL23 (100 aa).

This sequence belongs to the universal ribosomal protein uL23 family. As to quaternary structure, part of the 50S ribosomal subunit. Contacts protein L29, and trigger factor when it is bound to the ribosome.

Functionally, one of the early assembly proteins it binds 23S rRNA. One of the proteins that surrounds the polypeptide exit tunnel on the outside of the ribosome. Forms the main docking site for trigger factor binding to the ribosome. The sequence is that of Large ribosomal subunit protein uL23 from Thermotoga maritima (strain ATCC 43589 / DSM 3109 / JCM 10099 / NBRC 100826 / MSB8).